A 762-amino-acid chain; its full sequence is MEGPRSSTHVPLVLPLLVLLLLAPARQAAAQRCPQACICDNSRRHVACRYQNLTEVPDAIPELTQRLDLQGNLLKVIPAAAFQGVPHLTHLDLRHCEVELVAEGAFRGLGRLLLLNLASNHLRELPQEALDGLGSLRRLELEGNALEELRPGTFGALGALATLNLAHNALVYLPAMAFQGLLRVRWLRLSHNALSVLAPEALAGLPALRRLSLHHNELQALPGPVLSQARGLARLELGHNPLTYAGEEDGLALPGLRELLLDGGALQALGPRAFAHCPRLHTLDLRGNQLDTLPPLQGPGQLRRLRLQGNPLWCGCQARPLLEWLARARVRSDGACQGPRRLRGEALDALRPWDLRCPGDAAQEEEELEERAVAGPRAPPRGPPRGPGEERAVAPCPRACVCVPESRHSSCEGCGLQAVPRGFPSDTQLLDLRRNHFPSVPRAAFPGLGHLVSLHLQHCGIAELEAGALAGLGRLIYLYLSDNQLAGLSAAALEGAPRLGYLYLERNRFLQVPGAALRALPSLFSLHLQDNAVDRLAPGDLGRTRALRWVYLSGNRITEVSLGALGPARELEKLHLDRNQLREVPTGALEGLPALLELQLSGNPLRALRDGAFQPVGRSLQHLFLNSSGLEQICPGAFSGLGPGLQSLHLQKNQLRALPALPSLSQLELIDLSSNPFHCDCQLLPLHRWLTGLNLRVGATCATPPNARGQRVKAAAAVFEDCPGWAARKAKRTPASRPSARRTPIKGRQCGADKVGKEKGRL.

A signal peptide spans 1 to 30 (MEGPRSSTHVPLVLPLLVLLLLAPARQAAA). Positions 31–62 (QRCPQACICDNSRRHVACRYQNLTEVPDAIPE) constitute an LRRNT 1 domain. Residue Asn-52 is glycosylated (N-linked (GlcNAc...) asparagine). LRR repeat units lie at residues 87-108 (HLTH…AFRG), 111-132 (RLLL…ALDG), 135-156 (SLRR…TFGA), 159-180 (ALAT…AFQG), 183-204 (RVRW…ALAG), 207-228 (ALRR…VLSQ), 231-252 (GLAR…DGLA), 255-276 (GLRE…AFAH), and 279-300 (RLHT…QGPG). The LRRCT 1 domain maps to 310 to 359 (NPLWCGCQARPLLEWLARARVRSDGACQGPRRLRGEALDALRPWDLRCPG). The tract at residues 364-390 (EEEELEERAVAGPRAPPRGPPRGPGEE) is disordered. Over residues 377-386 (RAPPRGPPRG) the composition is skewed to pro residues. An LRRNT 2 domain is found at 387-425 (PGEERAVAPCPRACVCVPESRHSSCEGCGLQAVPRGFPS). A disulfide bridge links Cys-396 with Cys-411. 10 LRR repeats span residues 426–447 (DTQL…AFPG), 450–471 (HLVS…ALAG), 474–495 (RLIY…ALEG), 498–519 (RLGY…ALRA), 522–543 (SLFS…DLGR), 546–566 (ALRW…GALG), 570–591 (ELEK…ALEG), 594–615 (ALLE…AFQP), 619–640 (SLQH…AFSG), and 644–665 (GLQS…PSLS). Residue Asn-626 is glycosylated (N-linked (GlcNAc...) asparagine). The 50-residue stretch at 675-724 (NPFHCDCQLLPLHRWLTGLNLRVGATCATPPNARGQRVKAAAAVFEDCPG) folds into the LRRCT 2 domain. 2 disulfides stabilise this stretch: Cys-679–Cys-722 and Cys-681–Cys-701. Residues 728 to 745 (RKAKRTPASRPSARRTPI) are compositionally biased toward basic residues. The tract at residues 728–762 (RKAKRTPASRPSARRTPIKGRQCGADKVGKEKGRL) is disordered.

This sequence belongs to the small leucine-rich proteoglycan (SLRP) family. SLRP class IV subfamily. As to quaternary structure, associates with collagen and binds to collagen fibrils.

It is found in the secreted. The protein resides in the extracellular space. Its subcellular location is the extracellular matrix. Potential negative modulator of chondrocyte differentiation. Inhibits collagen fibrillogenesis in vitro. May influence chondrocyte's differentiation by acting on its cellular collagenous microenvironment. The sequence is that of Chondroadherin-like protein (CHADL) from Homo sapiens (Human).